Consider the following 490-residue polypeptide: GTPase Der (490 aa).

EngA-type G domains lie at 3-166 and 200-373; these read PVVA…AEAM and IKLA…DSAT. Residues 9–16, 56–60, 118–121, 206–213, 253–257, and 318–321 each bind GTP; these read GRPNVGKS, DTGGI, NKVD, GKPNVGKS, DTAGV, and NKWD. Residues 374 to 458 enclose the KH-like domain; that stretch reads RRVSTSMLTR…PIQIRFQDGG (85 aa).

This sequence belongs to the TRAFAC class TrmE-Era-EngA-EngB-Septin-like GTPase superfamily. EngA (Der) GTPase family. In terms of assembly, associates with the 50S ribosomal subunit.

In terms of biological role, GTPase that plays an essential role in the late steps of ribosome biogenesis. The sequence is that of GTPase Der from Shewanella piezotolerans (strain WP3 / JCM 13877).